Consider the following 332-residue polypeptide: L-lactate dehydrogenase C chain (332 aa).

Serine 2 carries the blocked amino end (Ser) modification. Residues 29 to 57 and arginine 99 each bind NAD(+); that span reads GNVG…DENK. Residues arginine 106, asparagine 138, and arginine 169 each contribute to the substrate site. Asparagine 138 is an NAD(+) binding site. Residue histidine 193 is the Proton acceptor of the active site. Threonine 248 lines the substrate pocket.

This sequence belongs to the LDH/MDH superfamily. LDH family. Homotetramer. Interacts with RABL2/RABL2A; binds preferentially to GTP-bound RABL2.

The protein localises to the cytoplasm. It catalyses the reaction (S)-lactate + NAD(+) = pyruvate + NADH + H(+). It participates in fermentation; pyruvate fermentation to lactate; (S)-lactate from pyruvate: step 1/1. Possible role in sperm motility. In Rattus norvegicus (Rat), this protein is L-lactate dehydrogenase C chain (Ldhc).